We begin with the raw amino-acid sequence, 125 residues long: NADPH-dependent 7-cyano-7-deazaguanine reductase (125 aa).

Cys41 functions as the Thioimide intermediate in the catalytic mechanism. Asp48 functions as the Proton donor in the catalytic mechanism. Residues Ile63–Leu65 and His82–Glu83 contribute to the substrate site.

It belongs to the GTP cyclohydrolase I family. QueF type 1 subfamily.

Its subcellular location is the cytoplasm. It catalyses the reaction 7-aminomethyl-7-carbaguanine + 2 NADP(+) = 7-cyano-7-deazaguanine + 2 NADPH + 3 H(+). It participates in tRNA modification; tRNA-queuosine biosynthesis. In terms of biological role, catalyzes the NADPH-dependent reduction of 7-cyano-7-deazaguanine (preQ0) to 7-aminomethyl-7-deazaguanine (preQ1). The protein is NADPH-dependent 7-cyano-7-deazaguanine reductase of Sulfurovum sp. (strain NBC37-1).